Consider the following 361-residue polypeptide: Mitochondrial fission regulator 2 (361 aa).

Ser-137 carries the post-translational modification Phosphoserine. Disordered stretches follow at residues 191–286 (FIDL…VPNM) and 298–322 (LRPV…EWDP). Positions 219–231 (VLPPPPPPPPPPQ) are enriched in pro residues. The segment covering 232–244 (FSLQPPSSLPMQP) has biased composition (low complexity). Positions 250–282 (HDIDSLATEMERQLSGVKKTDDSHHSKSQRLRD) are enriched in basic and acidic residues. Residues Ser-304 and Ser-340 each carry the phosphoserine modification.

Belongs to the MTFR1 family. Expressed predominantly in testis (at protein level). Expressed to a lower extent in spleen.

The protein localises to the mitochondrion. In terms of biological role, may play a role in mitochondrial aerobic respiration essentially in the testis. Can also promote mitochondrial fission. The polypeptide is Mitochondrial fission regulator 2 (Mtfr2) (Mus musculus (Mouse)).